A 361-amino-acid polypeptide reads, in one-letter code: Queuine tRNA-ribosyltransferase (361 aa).

D92 functions as the Proton acceptor in the catalytic mechanism. Residues 92–96, D146, Q189, and G216 each bind substrate; that span reads DSGGF. Residues 247-253 form an RNA binding region; that stretch reads GVGKPSD. D266 serves as the catalytic Nucleophile. The interval 271-275 is RNA binding; important for wobble base 34 recognition; the sequence is TRSGR. C304, C306, C309, and H335 together coordinate Zn(2+).

Belongs to the queuine tRNA-ribosyltransferase family. As to quaternary structure, homodimer. Within each dimer, one monomer is responsible for RNA recognition and catalysis, while the other monomer binds to the replacement base PreQ1. Requires Zn(2+) as cofactor.

The catalysed reaction is 7-aminomethyl-7-carbaguanine + guanosine(34) in tRNA = 7-aminomethyl-7-carbaguanosine(34) in tRNA + guanine. Its pathway is tRNA modification; tRNA-queuosine biosynthesis. Functionally, catalyzes the base-exchange of a guanine (G) residue with the queuine precursor 7-aminomethyl-7-deazaguanine (PreQ1) at position 34 (anticodon wobble position) in tRNAs with GU(N) anticodons (tRNA-Asp, -Asn, -His and -Tyr). Catalysis occurs through a double-displacement mechanism. The nucleophile active site attacks the C1' of nucleotide 34 to detach the guanine base from the RNA, forming a covalent enzyme-RNA intermediate. The proton acceptor active site deprotonates the incoming PreQ1, allowing a nucleophilic attack on the C1' of the ribose to form the product. After dissociation, two additional enzymatic reactions on the tRNA convert PreQ1 to queuine (Q), resulting in the hypermodified nucleoside queuosine (7-(((4,5-cis-dihydroxy-2-cyclopenten-1-yl)amino)methyl)-7-deazaguanosine). The protein is Queuine tRNA-ribosyltransferase of Rickettsia prowazekii (strain Madrid E).